Consider the following 365-residue polypeptide: Class I histocompatibility antigen, B alpha chain (365 aa).

The first 24 residues, 1-24 (MTVMAPRTLLLLLSGALVLTETWA), serve as a signal peptide directing secretion. An alpha-1 region spans residues 25–114 (GSHSMRYFST…ALGYYNQSEA (90 aa)). Topologically, residues 25 to 308 (GSHSMRYFST…EPPSQPTIPI (284 aa)) are extracellular. Asn110 carries N-linked (GlcNAc...) asparagine glycosylation. An alpha-2 region spans residues 115–206 (GSHTIQMMSG…ENGKETLQRA (92 aa)). 2 disulfide bridges follow: Cys125–Cys188 and Cys227–Cys283. The interval 207-298 (EPPKTHVTHH…GLPEPLTLRW (92 aa)) is alpha-3. The Ig-like C1-type domain maps to 209 to 297 (PKTHVTHHPV…EGLPEPLTLR (89 aa)). The tract at residues 299–308 (EPPSQPTIPI) is connecting peptide. A helical transmembrane segment spans residues 309 to 332 (MGIVAILAILGAVVTGAVVTAVMW). Residues 333 to 365 (RKKSSDKKGGSYSQAARSDSAQGSDVSLTACKV) are Cytoplasmic-facing. Positions 337 to 361 (SDKKGGSYSQAARSDSAQGSDVSLT) are disordered. Over residues 346-359 (QAARSDSAQGSDVS) the composition is skewed to polar residues. Ser356 and Ser359 each carry phosphoserine.

Belongs to the MHC class I family. Heterodimer of an alpha chain and a beta chain (beta-2-microglobulin).

It localises to the membrane. Its function is as follows. Involved in the presentation of foreign antigens to the immune system. In Saguinus oedipus (Cotton-top tamarin), this protein is Class I histocompatibility antigen, B alpha chain.